The primary structure comprises 572 residues: Transcription factor E3 (572 aa).

Phosphoserine; by MTOR is present on Ser47. The segment covering 87–125 (TTPATLSASSSAGGSRTPAMSSSSSRVLLRQQLMRAQAQ) has biased composition (low complexity). The segment at 87–152 (TTPATLSASS…SPAPASPAIS (66 aa)) is disordered. Residues 126–135 (EQERRERREQ) show a composition bias toward basic and acidic residues. Arg187 is subject to Asymmetric dimethylarginine. The interval 210–248 (LASQALTPPPGPSSAQPLPAPETAHATGPTGSAPNSPMA) is disordered. Residues 259 to 270 (EIDDVIDEIISL) form a strong transcription activation domain region. Ser320 carries the phosphoserine; by MTOR modification. Lys338 participates in a covalent cross-link: Glycyl lysine isopeptide (Lys-Gly) (interchain with G-Cter in SUMO2). Positions 345 to 398 (QKKDNHNLIERRRRFNINDRIKELGTLIPKSNDPEMRWNKGTILKASVDYIRKL) constitute a bHLH domain. Residues 355–358 (RRRR) carry the Nuclear localization signal motif. The segment at 408 to 429 (LESRQRSLEQANRSLQLRIQEL) is leucine-zipper. 2 disordered regions span residues 439 to 495 (PVPP…APPS) and 530 to 572 (VGGL…EEES). The segment covering 446-457 (LLSLTTSSVSDS) has biased composition (low complexity). Residues Ser539, Ser545, Ser551, Ser553, Ser557, and Ser565 each carry the phosphoserine modification. A compositionally biased stretch (low complexity) spans 543-572 (AASDPLLSSVSPAVSKASSRRSSFSMEEES).

It belongs to the MiT/TFE family. In terms of assembly, homodimer and heterodimer; with TFEB or MITF. Interacts with RRAGC/RagC GDP-bound and RRAGD/RagD GDP-bound; promoting its recruitment to lysosomal membrane in the presence of nutrients. Interacts with TSC22D1; the interaction is enhanced in the presence of TGF-beta. In terms of processing, sumoylated; does not affect dimerization with MITF. Phosphorylation ar Ser-47 and Ser-320 by MTOR via non-canonical mTORC1 pathway regulates its stability and subcellular location, respectively. When nutrients are present, phosphorylation by MTOR at Ser-47 promotes ubiquitination by the SCF(BTRC) complex, followed by degradation. When nutrients are present, phosphorylation by MTOR at Ser-320 also promotes association with 14-3-3/YWHA adapters and retention in the cytosol. Phosphorylation at Ser-47 plays a more critical role than phosphorylation at Ser-320 for TFE3 inactivation. Inhibition of mTORC1, starvation and lysosomal disruption, promotes dephosphorylation and transcription factor activity. Post-translationally, ubiquitinated by the SCF(BTRC) and SCF(FBXW11) complexes following phosphorylation at Ser-47 by MTOR, leading to its degradation by the proteasome. Widely expressed.

The protein localises to the cytoplasm. It is found in the cytosol. Its subcellular location is the nucleus. It localises to the lysosome membrane. Its function is as follows. Transcription factor that acts as a master regulator of lysosomal biogenesis and immune response. Specifically recognizes and binds E-box sequences (5'-CANNTG-3'); efficient DNA-binding requires dimerization with itself or with another MiT/TFE family member such as TFEB or MITF. Involved in the cellular response to amino acid availability by acting downstream of MTOR: in the presence of nutrients, TFE3 phosphorylation by MTOR promotes its inactivation. Upon starvation or lysosomal stress, inhibition of MTOR induces TFE3 dephosphorylation, resulting in transcription factor activity. Specifically recognizes and binds the CLEAR-box sequence (5'-GTCACGTGAC-3') present in the regulatory region of many lysosomal genes, leading to activate their expression, thereby playing a central role in expression of lysosomal genes. Maintains the pluripotent state of embryonic stem cells by promoting the expression of genes such as ESRRB; mTOR-dependent TFE3 cytosolic retention and inactivation promotes exit from pluripotency. Required to maintain the naive pluripotent state of hematopoietic stem cell; mTOR-dependent cytoplasmic retention of TFE3 promotes the exit of hematopoietic stem cell from pluripotency. TFE3 activity is also involved in the inhibition of neuronal progenitor differentiation. Acts as a positive regulator of browning of adipose tissue by promoting expression of target genes; mTOR-dependent phosphorylation promotes cytoplasmic retention of TFE3 and inhibits browning of adipose tissue. In association with TFEB, activates the expression of CD40L in T-cells, thereby playing a role in T-cell-dependent antibody responses in activated CD4(+) T-cells and thymus-dependent humoral immunity. Specifically recognizes the MUE3 box, a subset of E-boxes, present in the immunoglobulin enhancer. It also binds very well to a USF/MLTF site. Promotes TGF-beta-induced transcription of COL1A2; via its interaction with TSC22D1 at E-boxes in the gene proximal promoter. May regulate lysosomal positioning in response to nutrient deprivation by promoting the expression of PIP4P1. The chain is Transcription factor E3 from Mus musculus (Mouse).